Here is a 613-residue protein sequence, read N- to C-terminus: MAIDCLVLGAGQEIGKSCVVVTINGKKIMFDCGMHMGCDDHNRYPNFSLISKSGDFDNAISCIIITHFHMDHVGALPYFTEVCGYNGPIYMSYPTKALSPLMLEDYRRVMVDRRGEEELFTTTHIANCMKKVIAIDLKQTIQVDEDLQIRAYYAGHVLGAVMVYAKMGDAAIVYTGDYNMTTDRHLGAAKIDRLQLDLLISESTYATTIRGSKYPREREFLQAVHKCVAGGGKALIPSFALGRAQELCMLLDDYWERMNIKVPIYFSSGLTIQANMYYKMLISWTSQNVKEKHNTHNPFDFKNVKDFDRSLIHAPGPCVLFATPGMLCAGFSLEVFKHWAPSPLNLVALPGYSVAGTVGHKLMAGKPTTVDLYNGTKVDVRCKVHQVAFSPHTDAKGIMDLTKFLSPKNVVLVHGEKPSMMILKEKITSELDIPCFVPANGETVSFASTTYIKANASDMFLKSCSNPNFKFSNSTQLRVTDHRTADGVLVIEKSKKAKIVHQDEISEVLHEKNHVVSLAHCCPVKVKGESEDDDVDLIKQLSAKILKTVSGAQIHESENCLQVASFKGSLCLKDKCMHRSSSSSSEAVFLCCNWSIADLELGWEIINAIKLNH.

The HXHXDH motif motif lies at 67–72 (HFHMDH).

The protein belongs to the metallo-beta-lactamase superfamily. RNA-metabolizing metallo-beta-lactamase-like family. INTS11 subfamily. As to quaternary structure, component of the CPSF complex, at least composed of CPSF160, CPSF100, CPSF73-I, CPSF73-II, CPSF30, FY and FIPS5. Interacts with CPSF30, CPSF100, CPSF160 and FY. In terms of tissue distribution, highly expressed in senescence leaves, petals, stamens, pollen and late stages of siliques with seeds. Also detected in roots, stems, leaves and seedlings.

Its subcellular location is the nucleus. Its function is as follows. Component of the cleavage and polyadenylation specificity factor (CPSF) complex that play a key role in pre-mRNA 3'-end formation, recognizing the AAUAAA signal sequence and interacting with poly(A) polymerase and other factors to bring about cleavage and poly(A) addition. May function as mRNA 3'-end-processing endonuclease and also be involved in the histone 3'-end pre-mRNA processing. The polypeptide is Cleavage and polyadenylation specificity factor subunit 3-II (CPSF73-II) (Arabidopsis thaliana (Mouse-ear cress)).